The following is a 140-amino-acid chain: Nucleoside diphosphate kinase (140 aa).

6 residues coordinate ATP: Lys10, Phe58, Arg86, Thr92, Arg103, and Asn113. Catalysis depends on His116, which acts as the Pros-phosphohistidine intermediate.

Belongs to the NDK family. In terms of assembly, homotetramer. Mg(2+) serves as cofactor.

It localises to the cytoplasm. It catalyses the reaction a 2'-deoxyribonucleoside 5'-diphosphate + ATP = a 2'-deoxyribonucleoside 5'-triphosphate + ADP. The catalysed reaction is a ribonucleoside 5'-diphosphate + ATP = a ribonucleoside 5'-triphosphate + ADP. Functionally, major role in the synthesis of nucleoside triphosphates other than ATP. The ATP gamma phosphate is transferred to the NDP beta phosphate via a ping-pong mechanism, using a phosphorylated active-site intermediate. This Anaplasma phagocytophilum (strain HZ) protein is Nucleoside diphosphate kinase.